The primary structure comprises 216 residues: MKGSPLFHGLAPEEVDLALSYFQRRLYPQGKPIFYQGDLGQALYLVASGKVRLFRTHLGGQERTLALLGPGELFGEMSLLDEGERSASAVAVEDTELLALFREDYLALIRRLPLVAHNLAALLARRLREADLELDLLSFEEARNRVAYALLKLLRQGLGPLFQIRHHELAALAGTSRETVSRVLHALAEEGVVRLGPGTVEVREAALLEEIAFGLA.

6–126 (LFHGLAPEEV…HNLAALLARR (121 aa)) contributes to the a nucleoside 3',5'-cyclic phosphate binding site. Residues 75–78 (GEMS) and 85–86 (RS) contribute to the 3',5'-cyclic AMP site. The 67-residue stretch at 140 to 206 (EEARNRVAYA…PGTVEVREAA (67 aa)) folds into the HTH crp-type domain. Residues 166–185 (HHELAALAGTSRETVSRVLH) constitute a DNA-binding region (H-T-H motif).

In terms of assembly, homodimer.

Activates transcription. Positively regulates six promoters upstream of the TTHB186, TTHB147, TTHB178, TTHB159, TTHA0771 and TTHA0176 genes in a cAMP-dependent manner. Regulated genes include clustered regularly interspaced short palindromic repeat (CRISPR) associated (Cas) genes, and the genes encoding a putative transcriptional regulator, a protein containing the exonuclease III-like domain of DNA polymerase, a GCN5-related acetyltransferase homolog, and some T.thermophilus-specific proteins of unknown function. The consensus DNA-binding site of this transcriptional regulator is 5'-(CT)NNG(G/T)(G/T)C(A/C)N(A/T)NNTCACAN(G/C)(G/C)-3' in which N is G, A, T or C. The sequence is that of Cyclic AMP receptor protein from Thermus thermophilus (strain ATCC 27634 / DSM 579 / HB8).